Consider the following 309-residue polypeptide: Probable sugar phosphate/phosphate translocator At5g05820 (309 aa).

Transmembrane regions (helical) follow at residues 9–29, 42–62, 77–97, 100–120, 130–150, 154–174, 192–212, 229–249, 256–278, and 282–301; these read FFTI…LLLN, IFLT…AIAW, FFKI…GNIS, FLPV…TAVF, AWLT…ASGG, FHLF…LKSV, LLLY…LIME, IVWY…TNFL, ALTL…ILIF, and VSVT…ILYS. Residues 30–147 form the EamA domain; that stretch reads KYLLSNYGFK…VPVVTGVVIA (118 aa).

The protein belongs to the TPT transporter family. TPT (TC 2.A.7.9) subfamily.

The protein localises to the membrane. The polypeptide is Probable sugar phosphate/phosphate translocator At5g05820 (Arabidopsis thaliana (Mouse-ear cress)).